A 355-amino-acid chain; its full sequence is Glycerol-1-phosphate dehydrogenase [NAD(P)+] (355 aa).

NAD(+) is bound by residues 101-105 and 123-126; these read GKSID and TAAS. Position 128 (Asp128) interacts with substrate. Residue Ser132 coordinates NAD(+). Asp175 contributes to the substrate binding site. Residues Asp175 and His255 each contribute to the Zn(2+) site. His259 lines the substrate pocket. His271 lines the Zn(2+) pocket.

Belongs to the glycerol-1-phosphate dehydrogenase family. In terms of assembly, homodimer. The cofactor is Zn(2+).

It is found in the cytoplasm. It carries out the reaction sn-glycerol 1-phosphate + NAD(+) = dihydroxyacetone phosphate + NADH + H(+). The enzyme catalyses sn-glycerol 1-phosphate + NADP(+) = dihydroxyacetone phosphate + NADPH + H(+). It functions in the pathway membrane lipid metabolism; glycerophospholipid metabolism. Functionally, catalyzes the NAD(P)H-dependent reduction of dihydroxyacetonephosphate (DHAP or glycerone phosphate) to glycerol 1-phosphate (G1P). The G1P thus generated is used as the glycerophosphate backbone of phospholipids in the cellular membranes of Archaea. The sequence is that of Glycerol-1-phosphate dehydrogenase [NAD(P)+] from Staphylothermus marinus (strain ATCC 43588 / DSM 3639 / JCM 9404 / F1).